Here is a 356-residue protein sequence, read N- to C-terminus: uncharacterized protein (356 aa).

The protein belongs to the NAD(P)-dependent epimerase/dehydratase family. NAD(+) is required as a cofactor. NADP(+) serves as cofactor.

In terms of biological role, putative nucleotide sugar epimerase/dehydrogenase. This is an uncharacterized protein from Sinorhizobium fredii (strain NBRC 101917 / NGR234).